Here is a 348-residue protein sequence, read N- to C-terminus: Phenylalanine--tRNA ligase alpha subunit (348 aa).

E268 contacts Mg(2+).

This sequence belongs to the class-II aminoacyl-tRNA synthetase family. Phe-tRNA synthetase alpha subunit type 1 subfamily. As to quaternary structure, tetramer of two alpha and two beta subunits. Mg(2+) serves as cofactor.

It is found in the cytoplasm. It catalyses the reaction tRNA(Phe) + L-phenylalanine + ATP = L-phenylalanyl-tRNA(Phe) + AMP + diphosphate + H(+). The polypeptide is Phenylalanine--tRNA ligase alpha subunit (Bordetella bronchiseptica (strain ATCC BAA-588 / NCTC 13252 / RB50) (Alcaligenes bronchisepticus)).